Consider the following 783-residue polypeptide: Probable galactinol--sucrose galactosyltransferase 5 (783 aa).

Phosphoserine is present on residues serine 9 and serine 11.

It belongs to the glycosyl hydrolases 36 family.

The enzyme catalyses alpha-D-galactosyl-(1-&gt;3)-1D-myo-inositol + sucrose = raffinose + myo-inositol. In terms of biological role, transglycosidase operating by a ping-pong reaction mechanism. Involved in the synthesis of raffinose, a major soluble carbohydrate in seeds, roots and tubers. The chain is Probable galactinol--sucrose galactosyltransferase 5 (RFS5) from Arabidopsis thaliana (Mouse-ear cress).